The sequence spans 297 residues: N-acetylneuraminate lyase (297 aa).

Positions 47 and 48 each coordinate aceneuramate. The Proton donor role is filled by tyrosine 137. Lysine 165 (schiff-base intermediate with substrate) is an active-site residue. Residues threonine 167, glycine 189, aspartate 191, glutamate 192, and serine 208 each coordinate aceneuramate.

Belongs to the DapA family. NanA subfamily. Homotetramer.

Its subcellular location is the cytoplasm. It carries out the reaction aceneuramate = aldehydo-N-acetyl-D-mannosamine + pyruvate. It functions in the pathway amino-sugar metabolism; N-acetylneuraminate degradation; D-fructose 6-phosphate from N-acetylneuraminate: step 1/5. Its function is as follows. Catalyzes the reversible aldol cleavage of N-acetylneuraminic acid (sialic acid; Neu5Ac) to form pyruvate and N-acetylmannosamine (ManNAc) via a Schiff base intermediate. The protein is N-acetylneuraminate lyase of Salmonella paratyphi A (strain AKU_12601).